We begin with the raw amino-acid sequence, 444 residues long: tRNA-2-methylthio-N(6)-dimethylallyladenosine synthase (444 aa).

The MTTase N-terminal domain occupies 10 to 126 (SSFYIHTFGC…LAGLVAGLRE (117 aa)). Positions 19, 55, 89, 163, 167, and 170 each coordinate [4Fe-4S] cluster. The region spanning 149 to 379 (RAGSISAFLP…IELQNAISRE (231 aa)) is the Radical SAM core domain. The TRAM domain occupies 382–444 (QREIGKTVEV…TSATLSGEAV (63 aa)).

Belongs to the methylthiotransferase family. MiaB subfamily. As to quaternary structure, monomer. Requires [4Fe-4S] cluster as cofactor.

The protein resides in the cytoplasm. It catalyses the reaction N(6)-dimethylallyladenosine(37) in tRNA + (sulfur carrier)-SH + AH2 + 2 S-adenosyl-L-methionine = 2-methylsulfanyl-N(6)-dimethylallyladenosine(37) in tRNA + (sulfur carrier)-H + 5'-deoxyadenosine + L-methionine + A + S-adenosyl-L-homocysteine + 2 H(+). In terms of biological role, catalyzes the methylthiolation of N6-(dimethylallyl)adenosine (i(6)A), leading to the formation of 2-methylthio-N6-(dimethylallyl)adenosine (ms(2)i(6)A) at position 37 in tRNAs that read codons beginning with uridine. The sequence is that of tRNA-2-methylthio-N(6)-dimethylallyladenosine synthase from Chlorobaculum tepidum (strain ATCC 49652 / DSM 12025 / NBRC 103806 / TLS) (Chlorobium tepidum).